Here is a 462-residue protein sequence, read N- to C-terminus: Cytokine-like nuclear factor N-PAC (462 aa).

Residues 8–66 (IGDLVWGKLGRYPPWPGKVVSPPKDLKKPRGKKCFFVKFFGTEDHAWIKVEQLKPYHPH) enclose the PWWP domain. Positions 91–111 (KKAKGKDQSHSDDKSKSDKGR) are enriched in basic and acidic residues. A disordered region spans residues 91-139 (KKAKGKDQSHSDDKSKSDKGRKAAKPMKIIEEDDEDAFKGGSSDKPASS). The dehydrogenase domain stretch occupies residues 169 to 462 (GSITPTDKRI…MSAVYRAYIH (294 aa)). NAD(+) is bound by residues 179–193 (GFLG…VVSN), Thr-270, and Lys-414.

It belongs to the HIBADH-related family. NP60 subfamily. As to quaternary structure, homotetramere. Binds to mononucleosomes.

Its subcellular location is the nucleus. The protein resides in the chromosome. Functionally, may have oxidoreductase activity. Regulates p38 MAP kinase activity by mediating stress activation of mapk14 and specifically regulating mapk14 signaling. Cytokine-like nuclear factor with chromatin gene reader activity involved in chromatin modification and regulation of gene expression. Acts as a nucleosome-destabilizing factor that is recruited to genes during transcriptional activation. Recognizes and binds histone H3 without a preference for specific epigenetic markers and also binds DNA. Interacts with KDM1B and promotes its histone demethylase activity by facilitating the capture of H3 tails, they form a multifunctional enzyme complex that modifies transcribed chromatin and facilitates Pol II transcription through nucleosomes. The protein is Cytokine-like nuclear factor N-PAC (glyr1) of Danio rerio (Zebrafish).